The primary structure comprises 311 residues: Methionyl-tRNA formyltransferase (311 aa).

Residue 110 to 113 (SLLP) participates in (6S)-5,6,7,8-tetrahydrofolate binding.

This sequence belongs to the Fmt family.

The catalysed reaction is L-methionyl-tRNA(fMet) + (6R)-10-formyltetrahydrofolate = N-formyl-L-methionyl-tRNA(fMet) + (6S)-5,6,7,8-tetrahydrofolate + H(+). In terms of biological role, attaches a formyl group to the free amino group of methionyl-tRNA(fMet). The formyl group appears to play a dual role in the initiator identity of N-formylmethionyl-tRNA by promoting its recognition by IF2 and preventing the misappropriation of this tRNA by the elongation apparatus. The chain is Methionyl-tRNA formyltransferase from Streptococcus sanguinis (strain SK36).